We begin with the raw amino-acid sequence, 411 residues long: Protein translocase subunit SecY (411 aa).

10 helical membrane-spanning segments follow: residues 13-33 (FTLL…PGID), 52-72 (IFSG…VPYI), 111-131 (ALGW…PYVF), 135-155 (FTFV…IMWL), 163-180 (GIGN…VSGL), 197-217 (SIKF…TIFV), 252-272 (GVMP…LTQL), 291-311 (LYLV…TSIV), 350-370 (FLGA…EKVA), and 377-397 (GLGA…AKQI).

The protein belongs to the SecY/SEC61-alpha family. As to quaternary structure, component of the plastid Sec protein translocase complex, which is composed of at least SecY, SecE and SecG.

Its subcellular location is the plastid. The protein resides in the chloroplast thylakoid membrane. In terms of biological role, the central subunit of the protein translocation channel SecYE. Consists of two halves formed by TMs 1-5 and 6-10. These two domains form a lateral gate at the front which open onto the bilayer between TMs 2 and 7, and are clamped together by SecE at the back. The channel is closed by both a pore ring composed of hydrophobic SecY resides and a short helix (helix 2A) on the extracellular side of the membrane which forms a plug. The polypeptide is Protein translocase subunit SecY (Porphyra purpurea (Red seaweed)).